The primary structure comprises 246 residues: E3 ubiquitin-protein ligase MARCHF2 (246 aa).

An RING-CH-type zinc finger spans residues 56 to 116; the sequence is GTQSDGPICR…ELCHTEFAVE (61 aa). Positions 64, 67, 80, 82, 90, 93, 106, and 109 each coordinate Zn(2+). 2 helical membrane passes run 138 to 158 and 175 to 195; these read LFCDMVCFLFITPLAAISGWL and AVGLIALTIALFTIYVLWTLV.

It is found in the endoplasmic reticulum membrane. The protein localises to the lysosome membrane. The protein resides in the endosome membrane. The catalysed reaction is S-ubiquitinyl-[E2 ubiquitin-conjugating enzyme]-L-cysteine + [acceptor protein]-L-lysine = [E2 ubiquitin-conjugating enzyme]-L-cysteine + N(6)-ubiquitinyl-[acceptor protein]-L-lysine.. Its pathway is protein modification; protein ubiquitination. Its function is as follows. E3 ubiquitin-protein ligase which may be involved in endosomal trafficking. E3 ubiquitin ligases accept ubiquitin from an E2 ubiquitin-conjugating enzyme in the form of a thioester and then directly transfer the ubiquitin to targeted substrates. The sequence is that of E3 ubiquitin-protein ligase MARCHF2 (marchf2) from Xenopus laevis (African clawed frog).